The primary structure comprises 103 residues: Vesicle-associated membrane protein 3 (103 aa).

Positions 1–25 (MSTGVPSGSSAATGSNRRLQQTQNQ) are disordered. The Cytoplasmic portion of the chain corresponds to 1 to 81 (MSTGVPSGSS…KRKYWWKNCK (81 aa)). The 61-residue stretch at 18-78 (RLQQTQNQVD…AKLKRKYWWK (61 aa)) folds into the v-SNARE coiled-coil homology domain. Glycyl lysine isopeptide (Lys-Gly) (interchain with G-Cter in ubiquitin) cross-links involve residues Lys70, Lys72, and Lys81. Residues 82 to 102 (MWAIGISVLVIIVIIIIVWCV) traverse the membrane as a helical; Anchor for type IV membrane protein segment. Position 103 (Ser103) is a topological domain, vesicular.

It belongs to the synaptobrevin family. As to quaternary structure, interacts with POPDC1 (via the C-terminus cytoplasmic tail). Interacts with BCAP31; involved in VAMP3 export from the endoplasmic reticulum. Interacts with BAIAP3; this interaction is increased in the presence of calcium. Interacts with PICALM. In terms of processing, ubiquitinated by RNF167 at Lys-70, Lys-72 and Lys-81, regulating the recycling endosome pathway. Post-translationally, (Microbial infection) Targeted and hydrolyzed by C.botulinum neurotoxin type D (BoNT/D, botD) which hydrolyzes the 46-Lys-|-Leu-47 bond and probably inhibits neurotransmitter release. (Microbial infection) Targeted and hydrolyzed by C.botulinum neurotoxin type F (BoNT/F, botF) which hydrolyzes the 45-Gln-|-Lys-46 bond and probably inhibits neurotransmitter release. In terms of processing, (Microbial infection) Targeted and hydrolyzed by C.tetani toxin (tetX) which hydrolyzes the 63-Gln-|-Phe-64 bond and probably inhibits neurotransmitter release. As to expression, ubiquitous.

It is found in the early endosome membrane. It localises to the recycling endosome membrane. The protein resides in the synapse. Its subcellular location is the synaptosome. Functionally, SNARE involved in vesicular transport from the late endosomes to the trans-Golgi network. The chain is Vesicle-associated membrane protein 3 (Vamp3) from Rattus norvegicus (Rat).